The primary structure comprises 156 residues: Small ribosomal subunit protein uS7 (156 aa).

It belongs to the universal ribosomal protein uS7 family. As to quaternary structure, part of the 30S ribosomal subunit. Contacts proteins S9 and S11.

In terms of biological role, one of the primary rRNA binding proteins, it binds directly to 16S rRNA where it nucleates assembly of the head domain of the 30S subunit. Is located at the subunit interface close to the decoding center, probably blocks exit of the E-site tRNA. The polypeptide is Small ribosomal subunit protein uS7 (Rhizobium rhizogenes (strain K84 / ATCC BAA-868) (Agrobacterium radiobacter)).